A 160-amino-acid polypeptide reads, in one-letter code: S-ribosylhomocysteine lyase (160 aa).

Fe cation contacts are provided by histidine 57, histidine 61, and cysteine 127.

This sequence belongs to the LuxS family. In terms of assembly, homodimer. Fe cation is required as a cofactor.

It carries out the reaction S-(5-deoxy-D-ribos-5-yl)-L-homocysteine = (S)-4,5-dihydroxypentane-2,3-dione + L-homocysteine. Functionally, involved in the synthesis of autoinducer 2 (AI-2) which is secreted by bacteria and is used to communicate both the cell density and the metabolic potential of the environment. The regulation of gene expression in response to changes in cell density is called quorum sensing. Catalyzes the transformation of S-ribosylhomocysteine (RHC) to homocysteine (HC) and 4,5-dihydroxy-2,3-pentadione (DPD). The polypeptide is S-ribosylhomocysteine lyase (Streptococcus sanguinis (strain SK36)).